The primary structure comprises 474 residues: Glutamate--tRNA ligase 1 (474 aa).

A 'HIGH' region motif is present at residues 10 to 20 (PSPTGFLHIGG). The 'KMSKS' region signature appears at 239–243 (KLSKR). Lys-242 contacts ATP.

It belongs to the class-I aminoacyl-tRNA synthetase family. Glutamate--tRNA ligase type 1 subfamily. In terms of assembly, monomer.

It is found in the cytoplasm. It carries out the reaction tRNA(Glu) + L-glutamate + ATP = L-glutamyl-tRNA(Glu) + AMP + diphosphate. In terms of biological role, catalyzes the attachment of glutamate to tRNA(Glu) in a two-step reaction: glutamate is first activated by ATP to form Glu-AMP and then transferred to the acceptor end of tRNA(Glu). The polypeptide is Glutamate--tRNA ligase 1 (Methylobacterium sp. (strain 4-46)).